Reading from the N-terminus, the 334-residue chain is MDDGVGVRAGCIRIRCPSPRRIVSRWLSPQGKVKGKKTPMAEPRVRDSDTVRIRTSSEDDHHRVGQFSDSPPPTIPSELQRREFLFSIGMSCYLIHLIATGRQEIHKIVELRNDLDKFLECRNEELRQKQQEFVELRNDIHKFLEFHNNELRRKQLEKTETSAYSATSDVVDGPESSTDHYYSPQIIQTSMSVGGEGSLSHYVYKLENDSGGEMDQLEAELEAEFELLQIGHNQEVSEDAEGLRLGHVCPGLVEEQQGVCPYELERRLYELMETRQQEEIKELEIALDDAKQRLHLKETEASWWKDTAYIVSERIPEPSRITHSSRTHPYPLSR.

A compositionally biased stretch (basic and acidic residues) spans 53-63 (IRTSSEDDHHR). The tract at residues 53-74 (IRTSSEDDHHRVGQFSDSPPPT) is disordered. Residues 273 to 300 (ETRQQEEIKELEIALDDAKQRLHLKETE) are a coiled coil.

The protein resides in the cytoplasm. Its subcellular location is the cell cortex. Its function is as follows. Acts as a stomatal lineage scaffold which regulates subcellular localization and transient polarization of kinases (e.g. ASK7/BIN2 and ASK3/SK12) involved in asymmetric cell division (ACD) in a BASL-dependent manner. The chain is Protein POLAR-like 1 from Arabidopsis thaliana (Mouse-ear cress).